A 344-amino-acid chain; its full sequence is MTSNFSQATLQLCYENVNASCIKTPYSPGLRVLLYMVFGFGAVLAVCGNLLVVISVLHFKQLHSPANFLIASLASADFLVGISVMPFSMVRSIESCWYFGDTFCSLHSCCDVAFCYSSALHLCFISVDRYIAVTDPLVYPTKFTVSVSGICISISWILPLVYSSAVFYTGISAMGIENLVSALNCVGGCQVVVNQDWVLISFLLFFIPTLVMIILYSKIFLVAKQQAVKIETSVSGSKGESSLESHKARVAKRERKAAKTLGVTVLAFIVSWLPYTIDTLIDAFMGFITPAYVYEFCCWSAYYNSAMNPLIYAFFYPWFRKAMKLILSGKILKGHSSTTSLFSE.

The Extracellular portion of the chain corresponds to 1–36; the sequence is MTSNFSQATLQLCYENVNASCIKTPYSPGLRVLLYM. N4 and N18 each carry an N-linked (GlcNAc...) asparagine glycan. Disulfide bonds link C21-C185 and C96-C189. The chain crosses the membrane as a helical span at residues 37-57; the sequence is VFGFGAVLAVCGNLLVVISVL. Residues 58-67 lie on the Cytoplasmic side of the membrane; it reads HFKQLHSPAN. A helical membrane pass occupies residues 68 to 88; the sequence is FLIASLASADFLVGISVMPFS. Topologically, residues 89–102 are extracellular; it reads MVRSIESCWYFGDT. The helical transmembrane segment at 103-127 threads the bilayer; sequence FCSLHSCCDVAFCYSSALHLCFISV. Residues 128-146 lie on the Cytoplasmic side of the membrane; sequence DRYIAVTDPLVYPTKFTVS. The chain crosses the membrane as a helical span at residues 147–167; sequence VSGICISISWILPLVYSSAVF. Topologically, residues 168 to 196 are extracellular; sequence YTGISAMGIENLVSALNCVGGCQVVVNQD. Residues 197–217 traverse the membrane as a helical segment; the sequence is WVLISFLLFFIPTLVMIILYS. Over 218–260 the chain is Cytoplasmic; that stretch reads KIFLVAKQQAVKIETSVSGSKGESSLESHKARVAKRERKAAKT. A helical transmembrane segment spans residues 261 to 281; it reads LGVTVLAFIVSWLPYTIDTLI. Over 282–295 the chain is Extracellular; it reads DAFMGFITPAYVYE. Residues 296 to 319 form a helical membrane-spanning segment; sequence FCCWSAYYNSAMNPLIYAFFYPWF. At 320-344 the chain is on the cytoplasmic side; it reads RKAMKLILSGKILKGHSSTTSLFSE.

This sequence belongs to the G-protein coupled receptor 1 family.

The protein resides in the cell membrane. Functionally, olfactory receptor activated by trace amines, such as N-methylpiperidine and N,N-dimethylcyclohexylamine. Trace amine compounds are enriched in animal body fluids and act on trace amine-associated receptors (TAARs) to elicit both intraspecific and interspecific innate behaviors. Ligand-binding causes a conformation change that triggers signaling via G(s)-class of G alpha proteins (GNAL or GNAS). In Rattus norvegicus (Rat), this protein is Trace amine-associated receptor 8c.